A 214-amino-acid chain; its full sequence is Charged multivesicular body protein 2b-A (214 aa).

The stretch at 25–55 (QRAITRDRTALEKQEKQLEMEIKKMAKAGNK) forms a coiled coil. Residues 178–214 (MAKAPSAAKGLPSASASKSTGISDEEIERQLKALGVD) form a disordered region. Positions 202-212 (EEIERQLKALG) match the MIT-interacting motif motif.

It belongs to the SNF7 family. Probable core component of the endosomal sorting required for transport complex III (ESCRT-III). ESCRT-III components are thought to multimerize to form a flat lattice on the perimeter membrane of the endosome.

The protein localises to the cytoplasm. It is found in the cytosol. Its subcellular location is the late endosome membrane. In terms of biological role, probable core component of the endosomal sorting required for transport complex III (ESCRT-III) which is involved in multivesicular bodies (MVBs) formation and sorting of endosomal cargo proteins into MVBs. MVBs contain intraluminal vesicles (ILVs) that are generated by invagination and scission from the limiting membrane of the endosome and mostly are delivered to lysosomes enabling degradation of membrane proteins, such as stimulated growth factor receptors, lysosomal enzymes and lipids. The polypeptide is Charged multivesicular body protein 2b-A (chmp2b-a) (Xenopus laevis (African clawed frog)).